The primary structure comprises 234 residues: uncharacterized protein (234 aa).

Residues 5–234 form the ABC transporter domain; sequence MELVDVWKIY…ERRGVVYGDT (230 aa). An ATP-binding site is contributed by 41 to 48; that stretch reads GPSGSGKS.

It belongs to the ABC transporter superfamily.

This is an uncharacterized protein from Thermotoga maritima (strain ATCC 43589 / DSM 3109 / JCM 10099 / NBRC 100826 / MSB8).